The sequence spans 202 residues: Small ribosomal subunit protein uS4 (202 aa).

One can recognise an S4 RNA-binding domain in the interval 94–157 (SRLDSLVYRA…LEMPLIKNTL (64 aa)).

This sequence belongs to the universal ribosomal protein uS4 family. In terms of assembly, part of the 30S ribosomal subunit. Contacts protein S5. The interaction surface between S4 and S5 is involved in control of translational fidelity.

In terms of biological role, one of the primary rRNA binding proteins, it binds directly to 16S rRNA where it nucleates assembly of the body of the 30S subunit. With S5 and S12 plays an important role in translational accuracy. The protein is Small ribosomal subunit protein uS4 of Ureaplasma urealyticum serovar 10 (strain ATCC 33699 / Western).